The sequence spans 304 residues: Recombination-associated protein RdgC (304 aa).

It belongs to the RdgC family.

It is found in the cytoplasm. It localises to the nucleoid. Its function is as follows. May be involved in recombination. The chain is Recombination-associated protein RdgC from Shewanella oneidensis (strain ATCC 700550 / JCM 31522 / CIP 106686 / LMG 19005 / NCIMB 14063 / MR-1).